A 414-amino-acid polypeptide reads, in one-letter code: Protein SOSEKI 2 (414 aa).

Residues 44 to 135 (RRVQVVYYLT…YVLKGSEITD (92 aa)) form a DIX-like oligomerization domain region. The segment at 171–273 (SFDDAELYVG…GDPVEPGSGR (103 aa)) is disordered. Over residues 173 to 192 (DDAELYVGEEEEEEDGEYEL) the composition is skewed to acidic residues. A compositionally biased stretch (polar residues) spans 205–229 (PQSRCSRGVSTETMESTEQKPNLTK). The span at 230-242 (TEQDLQVRSDSSD) shows a compositional bias: basic and acidic residues. The Association to cell membranes motif lies at 283–284 (CG).

It belongs to the SOSEKI family. Homodimer. Forms long polymer filaments with other SOKs proteins polymers (e.g. SOK1, SOK2, SOK3 and SOK4) crucial for polar localization and biological activity. Binds to ANGUSTIFOLIA (AN). In terms of tissue distribution, expressed during embryogenesis and in roots.

The protein resides in the cell membrane. Its function is as follows. Part of a three-gene cluster containing FLC, UFC and DFC, which is coordinately regulated in response to vernalization. Also regulated by FLX. SOSEKI proteins (SOK1-5) locally interpret global polarity cues and can influence cell division orientation to coordinate cell polarization relative to body axes, probably by guiding ANGUSTIFOLIA (AN) polarized localization. The chain is Protein SOSEKI 2 from Arabidopsis thaliana (Mouse-ear cress).